A 365-amino-acid chain; its full sequence is Alanine racemase (365 aa).

Lysine 32 acts as the Proton acceptor; specific for D-alanine in catalysis. Lysine 32 carries the N6-(pyridoxal phosphate)lysine modification. Arginine 128 lines the substrate pocket. Tyrosine 257 functions as the Proton acceptor; specific for L-alanine in the catalytic mechanism. Methionine 305 provides a ligand contact to substrate.

The protein belongs to the alanine racemase family. It depends on pyridoxal 5'-phosphate as a cofactor.

It catalyses the reaction L-alanine = D-alanine. It participates in amino-acid biosynthesis; D-alanine biosynthesis; D-alanine from L-alanine: step 1/1. Functionally, catalyzes the interconversion of L-alanine and D-alanine. May also act on other amino acids. This is Alanine racemase (alr) from Francisella tularensis subsp. holarctica (strain OSU18).